An 857-amino-acid polypeptide reads, in one-letter code: ATP-dependent RNA helicase DDX24 (857 aa).

Positions 61–179 (NPSRLFSSEE…SPKLPKKSKK (119 aa)) are disordered. A phosphoserine mark is found at Ser80 and Ser92. A compositionally biased stretch (basic residues) spans 152–161 (PRKKKNKGKK). Ser170 is subject to Phosphoserine. A Q motif motif is present at residues 193–221 (SAWRDLFVPKAVLRALSFLGFSAPTPIQA). Residues 225–528 (APAIRDKLDI…RILHKKHVKK (304 aa)) form the Helicase ATP-binding domain. 238–245 (AETGSGKT) provides a ligand contact to ATP. The tract at residues 279-363 (RFGATAHLGS…NEDGEEKFDA (85 aa)) is disordered. Phosphoserine is present on residues Ser288 and Ser296. Basic and acidic residues predominate over residues 290–307 (CKDRTESGVLPEEARIET). Residues 309 to 330 (AQPSDSGVQATPETSASASAQT) show a composition bias toward polar residues. Positions 345 to 363 (LEEKPVPKQNEDGEEKFDA) are enriched in basic and acidic residues. A Glycyl lysine isopeptide (Lys-Gly) (interchain with G-Cter in SUMO2) cross-link involves residue Lys370. The DEAD box signature appears at 471–474 (DEAD). Positions 576-723 (DLYLYYFLMQ…LFPVQSKYMD (148 aa)) constitute a Helicase C-terminal domain. A Glycyl lysine isopeptide (Lys-Gly) (interchain with G-Cter in SUMO2) cross-link involves residue Lys624. Residues 808-857 (RYPTQSGRPPQPVLASRNIESALSCLSRQKRRRKKPKEPRAPPQPGSSTS) form a disordered region. The segment covering 825-834 (NIESALSCLS) has biased composition (polar residues). Residues 835-844 (RQKRRRKKPK) show a composition bias toward basic residues. The segment covering 848-857 (APPQPGSSTS) has biased composition (pro residues).

It belongs to the DEAD box helicase family. DDX24/MAK5 subfamily. As to quaternary structure, interacts with FADD. Interacts with RIPK1; this interaction disrupts RLR signaling activation of IFN-dependent transcription factor IRF7. Interacts with NIP7. Interacts with EP300; this interaction prevents TP53 acetylation mediated by EP300. Ubiquitinated by MDM2 without targeting DDX24 for proteasomal degradation. Instead, polyubiquitylated DDX24 promotes interaction with NIP7, a component of pre-rRNP processing complex, and associates with pre-rRNA molecules and pre-ribosomal particles.

It localises to the cytoplasm. The protein localises to the nucleus. It carries out the reaction ATP + H2O = ADP + phosphate + H(+). Its function is as follows. ATP-dependent RNA helicase that plays a role in various aspects of RNA metabolism including pre-mRNA splicing and is thereby involved in different biological processes such as cell cycle regulation or innate immunity. Plays an inhibitory role in TP53 transcriptional activity and subsequently in TP53 controlled cell growth arrest and senescence by inhibiting its EP300 mediated acetylation. Negatively regulates cytosolic RNA-mediated innate immune signaling at least in part by affecting RIPK1/IRF7 interactions. Alternatively, possesses antiviral activity by recognizing gammaherpesvirus transcripts in the context of lytic reactivation. Plays an essential role in cell cycle regulation in vascular smooth muscle cells by interacting with and regulating FANCA (Fanconi anemia complementation group A) mRNA. The protein is ATP-dependent RNA helicase DDX24 (Ddx24) of Mus musculus (Mouse).